The primary structure comprises 89 residues: uncharacterized protein (89 aa).

This is an uncharacterized protein from Mycobacterium bovis (strain ATCC BAA-935 / AF2122/97).